The following is a 341-amino-acid chain: Nicotinate-nucleotide--dimethylbenzimidazole phosphoribosyltransferase (341 aa).

The active-site Proton acceptor is glutamate 306.

Belongs to the CobT family.

The enzyme catalyses 5,6-dimethylbenzimidazole + nicotinate beta-D-ribonucleotide = alpha-ribazole 5'-phosphate + nicotinate + H(+). It functions in the pathway nucleoside biosynthesis; alpha-ribazole biosynthesis; alpha-ribazole from 5,6-dimethylbenzimidazole: step 1/2. Its function is as follows. Catalyzes the synthesis of alpha-ribazole-5'-phosphate from nicotinate mononucleotide (NAMN) and 5,6-dimethylbenzimidazole (DMB). The protein is Nicotinate-nucleotide--dimethylbenzimidazole phosphoribosyltransferase of Methylocella silvestris (strain DSM 15510 / CIP 108128 / LMG 27833 / NCIMB 13906 / BL2).